The following is a 398-amino-acid chain: Phosphoglycerate kinase (398 aa).

Residues 23-25, Arg-38, 61-64, Arg-120, and Arg-153 contribute to the substrate site; these read DLN and HFGR. ATP contacts are provided by residues Lys-203, Glu-325, and 355 to 358; that span reads GGDT.

This sequence belongs to the phosphoglycerate kinase family. In terms of assembly, monomer.

The protein localises to the cytoplasm. It carries out the reaction (2R)-3-phosphoglycerate + ATP = (2R)-3-phospho-glyceroyl phosphate + ADP. The protein operates within carbohydrate degradation; glycolysis; pyruvate from D-glyceraldehyde 3-phosphate: step 2/5. This Mesorhizobium japonicum (strain LMG 29417 / CECT 9101 / MAFF 303099) (Mesorhizobium loti (strain MAFF 303099)) protein is Phosphoglycerate kinase.